A 473-amino-acid chain; its full sequence is Lactate utilization protein B 2 (473 aa).

2 consecutive 4Fe-4S ferredoxin-type domains span residues 302–332 (GSEF…GHSY) and 351–380 (YDDY…LHDL). [4Fe-4S] cluster-binding residues include C311, C314, C317, C321, C364, C367, and C371.

The protein belongs to the LutB/YkgF family.

Functionally, is involved in L-lactate degradation and allows cells to grow with lactate as the sole carbon source. Has probably a role as an electron transporter during oxidation of L-lactate. The sequence is that of Lactate utilization protein B 2 from Bacillus mycoides (strain KBAB4) (Bacillus weihenstephanensis).